Consider the following 487-residue polypeptide: Glutamyl-tRNA(Gln) amidotransferase subunit A (487 aa).

Active-site charge relay system residues include lysine 75 and serine 150. Serine 174 (acyl-ester intermediate) is an active-site residue.

This sequence belongs to the amidase family. GatA subfamily. As to quaternary structure, heterotrimer of A, B and C subunits.

It catalyses the reaction L-glutamyl-tRNA(Gln) + L-glutamine + ATP + H2O = L-glutaminyl-tRNA(Gln) + L-glutamate + ADP + phosphate + H(+). Functionally, allows the formation of correctly charged Gln-tRNA(Gln) through the transamidation of misacylated Glu-tRNA(Gln) in organisms which lack glutaminyl-tRNA synthetase. The reaction takes place in the presence of glutamine and ATP through an activated gamma-phospho-Glu-tRNA(Gln). The sequence is that of Glutamyl-tRNA(Gln) amidotransferase subunit A from Syntrophomonas wolfei subsp. wolfei (strain DSM 2245B / Goettingen).